Consider the following 173-residue polypeptide: Cytochrome b6-f complex subunit 4, chloroplastic (173 aa).

The transit peptide at 1-14 (ESALERRSSSVVMN) directs the protein to the chloroplast. Helical transmembrane passes span 49-69 (LLYM…GLAV), 108-128 (LLGV…PFIE), and 144-164 (SVFL…TLPI).

Belongs to the cytochrome b family. PetD subfamily. The 4 large subunits of the cytochrome b6-f complex are cytochrome b6, subunit IV (17 kDa polypeptide, petD), cytochrome f and the Rieske protein, while the 4 small subunits are petG, petL, petM and petN. The complex functions as a dimer.

The protein resides in the plastid. It is found in the chloroplast thylakoid membrane. Functionally, component of the cytochrome b6-f complex, which mediates electron transfer between photosystem II (PSII) and photosystem I (PSI), cyclic electron flow around PSI, and state transitions. This chain is Cytochrome b6-f complex subunit 4, chloroplastic, found in Euglena gracilis.